The sequence spans 961 residues: MPNTDSLNNLFASDEFISRHIGPDQNQVEKMLATLEVDSLDALIEKTVPATIREAQPLPLAEPVAEHTALEELKSLAAKNDVFTSYIGLGYHPTRVPNVILRNVLENPGWYTAYTPYQPEIAQGRLEGLLNFQQMITDLTGMEMANASMLDEATAAAEAMAMAKRVGRKNSSNCFFIDKNCYPQTIAVMRTRAEHFGFDIIVDAPEKALAGEDYFGAILQYPGADGGIGDIESWIKTIQSKDALAIVAADIMSLVLLRSPGDMGADIVIGCNQRFGIPMGFGGPHAAFFAFKEKHKRSTPGRIIGVSVDSRGKQALRMAMQTREQHIRREKANSNICTSQVLLAVMSAFYAMYHGAEGVDRIARRIHILTKMLSEGLISLGYKLRHTTFFDTLCIEVGDQQKPLLDRAQHARINLCAMGSGALSISLSECTTLDDLTALIAVFAGGESPLDMPSLEAKAQQKAVLSENLLRDGRALQHEIFSQYHSETEMLRYLKRLESRDIALNHAMIPLGSCTMKLNATAEMIPVTWPEFGNMHPFAPISQAAGYAEMFNQLQHMLAACTGYDAISLQPNAGSQGEYAGLLTIKKYFEAKGEVRSICLIPQSAHGTNPASAQMASMKVVVVNCDDDGNVDIADLDAKIAQHGENIAAIMVTYPSTHGVFEENITQICDKIHAVGAQVYIDGANMNALVGIASPGHFGGDVSHLNLHKTFCIPHGGGGPGMGPIGVKDHLAPYLAAHPLQEIPGTVAANGTVSAAPWGSASILPISWMYIRMMGAKGMKMASEYAILNANYIAKRLKNHFPILYSGKHGFVAHECLLDLRPLKEASGVSEEDIAKRLMDFGFHAPTMSFPVAGTLMIEPTESENQFELDRFCDAMIQIREEIRKIEQGELPADDNPLVNAPHTLDDVCNSEWNRSYTRDQACRPLDYLKHHKVWPTVNRIDNVYGDRNLICSCPGVDDYR.

Lysine 709 carries the post-translational modification N6-(pyridoxal phosphate)lysine.

The protein belongs to the GcvP family. As to quaternary structure, the glycine cleavage system is composed of four proteins: P, T, L and H. Requires pyridoxal 5'-phosphate as cofactor.

It catalyses the reaction N(6)-[(R)-lipoyl]-L-lysyl-[glycine-cleavage complex H protein] + glycine + H(+) = N(6)-[(R)-S(8)-aminomethyldihydrolipoyl]-L-lysyl-[glycine-cleavage complex H protein] + CO2. The glycine cleavage system catalyzes the degradation of glycine. The P protein binds the alpha-amino group of glycine through its pyridoxal phosphate cofactor; CO(2) is released and the remaining methylamine moiety is then transferred to the lipoamide cofactor of the H protein. This Teredinibacter turnerae (strain ATCC 39867 / T7901) protein is Glycine dehydrogenase (decarboxylating).